The chain runs to 109 residues: Putative double-stranded DNA mimic protein CKO_01325 (109 aa).

It belongs to the putative dsDNA mimic protein family.

May act as a double-stranded DNA (dsDNA) mimic. Probably regulates the activity of a dsDNA-binding protein. The chain is Putative double-stranded DNA mimic protein CKO_01325 from Citrobacter koseri (strain ATCC BAA-895 / CDC 4225-83 / SGSC4696).